The sequence spans 300 residues: Bifunctional protein FolD (300 aa).

NADP(+)-binding positions include 168–170 (GRS), S193, and I234.

The protein belongs to the tetrahydrofolate dehydrogenase/cyclohydrolase family. As to quaternary structure, homodimer.

The catalysed reaction is (6R)-5,10-methylene-5,6,7,8-tetrahydrofolate + NADP(+) = (6R)-5,10-methenyltetrahydrofolate + NADPH. The enzyme catalyses (6R)-5,10-methenyltetrahydrofolate + H2O = (6R)-10-formyltetrahydrofolate + H(+). It functions in the pathway one-carbon metabolism; tetrahydrofolate interconversion. Functionally, catalyzes the oxidation of 5,10-methylenetetrahydrofolate to 5,10-methenyltetrahydrofolate and then the hydrolysis of 5,10-methenyltetrahydrofolate to 10-formyltetrahydrofolate. The chain is Bifunctional protein FolD from Ehrlichia ruminantium (strain Gardel).